The sequence spans 111 residues: Nucleoid-associated protein Tmel_0542 (111 aa).

This sequence belongs to the YbaB/EbfC family. As to quaternary structure, homodimer.

It is found in the cytoplasm. The protein resides in the nucleoid. Functionally, binds to DNA and alters its conformation. May be involved in regulation of gene expression, nucleoid organization and DNA protection. This is Nucleoid-associated protein Tmel_0542 from Thermosipho melanesiensis (strain DSM 12029 / CIP 104789 / BI429).